The sequence spans 563 residues: uncharacterized protein (563 aa).

Positions Cys19–Cys45 form a DNA-binding region, zn(2)-C6 fungal-type. Positions Asn56–Pro78 are disordered. Over residues Ser64 to Glu75 the composition is skewed to polar residues.

Its subcellular location is the nucleus. This is an uncharacterized protein from Schizosaccharomyces pombe (strain 972 / ATCC 24843) (Fission yeast).